The sequence spans 53 residues: Photoreceptor disk component PRCD (53 aa).

Cys-2 is lipidated: S-palmitoyl cysteine. The segment at 24–53 (PEPSRVDGTVVGSGSDTDLQSTGREKGPVK) is disordered. The segment covering 35 to 45 (GSGSDTDLQST) has biased composition (polar residues).

Belongs to the PRCD family. As to quaternary structure, interacts with RHO/rhodopsin; the interaction promotes PRCD stability. Post-translationally, palmitoylated at Cys-2. Palmitoylation is essential for protein stability and trafficking to the photoreceptor outer segment, but does not appear to be essential for membrane localization. Probably palmitoylated by ZDHHC3. In terms of processing, phosphorylated. Expressed in retina, where it localizes to both rod and cone photoreceptors (at protein level).

The protein resides in the cell projection. Its subcellular location is the cilium. It localises to the photoreceptor outer segment. It is found in the membrane. The protein localises to the endoplasmic reticulum. The protein resides in the golgi apparatus. Involved in vision. In Mus musculus (Mouse), this protein is Photoreceptor disk component PRCD.